The chain runs to 440 residues: Adenylyltransferase and sulfurtransferase UBA4 (440 aa).

Met1 carries the N-acetylmethionine modification. ATP contacts are provided by residues Gly77, Asp98, 105–109 (SNLHR), Lys122, and 166–167 (DS). Residues Cys208 and Cys211 each coordinate Zn(2+). Cys225 acts as the Glycyl thioester intermediate; for adenylyltransferase activity in catalysis. Zn(2+) contacts are provided by Cys286 and Cys289. Phosphoserine is present on Ser326. In terms of domain architecture, Rhodanese spans 339–438 (FLAKHIFLDV…YIDDIDQTIP (100 aa)). Residue Cys397 is the Cysteine persulfide intermediate; for sulfurtransferase activity of the active site.

It in the N-terminal section; belongs to the HesA/MoeB/ThiF family. UBA4 subfamily. Requires Zn(2+) as cofactor.

Its subcellular location is the cytoplasm. The protein localises to the cytosol. It participates in tRNA modification; 5-methoxycarbonylmethyl-2-thiouridine-tRNA biosynthesis. In terms of biological role, plays a central role in 2-thiolation of mcm(5)S(2)U at tRNA wobble positions of cytosolic tRNA(Lys), tRNA(Glu) and tRNA(Gln). Acts by mediating the C-terminal thiocarboxylation of sulfur carrier URM1. Its N-terminus first activates URM1 as acyl-adenylate (-COAMP), then the persulfide sulfur on the catalytic cysteine is transferred to URM1 to form thiocarboxylation (-COSH) of its C-terminus. The reaction probably involves hydrogen sulfide that is generated from the persulfide intermediate and that acts as a nucleophile towards URM1. Subsequently, a transient disulfide bond is formed. Does not use thiosulfate as sulfur donor; NFS1 probably acting as a sulfur donor for thiocarboxylation reactions. Prior mcm(5) tRNA modification by the elongator complex is required for 2-thiolation. May also be involved in protein urmylation. This is Adenylyltransferase and sulfurtransferase UBA4 from Saccharomyces cerevisiae (strain RM11-1a) (Baker's yeast).